A 917-amino-acid chain; its full sequence is Isoleucine--tRNA ligase (917 aa).

A 'HIGH' region motif is present at residues 57–67; it reads PYANGNLHMGH. Glu-554 serves as a coordination point for L-isoleucyl-5'-AMP. Positions 595-599 match the 'KMSKS' region motif; the sequence is KMSKS. Lys-598 provides a ligand contact to ATP. The Zn(2+) site is built by Cys-886, Cys-889, Cys-906, and Cys-909.

This sequence belongs to the class-I aminoacyl-tRNA synthetase family. IleS type 1 subfamily. Monomer. Zn(2+) serves as cofactor.

Its subcellular location is the cytoplasm. The enzyme catalyses tRNA(Ile) + L-isoleucine + ATP = L-isoleucyl-tRNA(Ile) + AMP + diphosphate. Its function is as follows. Catalyzes the attachment of isoleucine to tRNA(Ile). As IleRS can inadvertently accommodate and process structurally similar amino acids such as valine, to avoid such errors it has two additional distinct tRNA(Ile)-dependent editing activities. One activity is designated as 'pretransfer' editing and involves the hydrolysis of activated Val-AMP. The other activity is designated 'posttransfer' editing and involves deacylation of mischarged Val-tRNA(Ile). The chain is Isoleucine--tRNA ligase (ileS) from Staphylococcus aureus (strain MSSA476).